We begin with the raw amino-acid sequence, 393 residues long: Phosphoglycerate kinase (393 aa).

Substrate contacts are provided by residues 22–24, arginine 37, 60–63, arginine 119, and arginine 152; these read DFN and HLGR. Residues lysine 202, glycine 293, glutamate 324, and 350–353 contribute to the ATP site; that span reads GGDS.

It belongs to the phosphoglycerate kinase family. In terms of assembly, monomer.

It is found in the cytoplasm. The catalysed reaction is (2R)-3-phosphoglycerate + ATP = (2R)-3-phospho-glyceroyl phosphate + ADP. The protein operates within carbohydrate degradation; glycolysis; pyruvate from D-glyceraldehyde 3-phosphate: step 2/5. The chain is Phosphoglycerate kinase from Borreliella burgdorferi (strain ZS7) (Borrelia burgdorferi).